Consider the following 117-residue polypeptide: Large ribosomal subunit protein bL20 (117 aa).

This sequence belongs to the bacterial ribosomal protein bL20 family.

Binds directly to 23S ribosomal RNA and is necessary for the in vitro assembly process of the 50S ribosomal subunit. It is not involved in the protein synthesizing functions of that subunit. The polypeptide is Large ribosomal subunit protein bL20 (Nitratidesulfovibrio vulgaris (strain DSM 19637 / Miyazaki F) (Desulfovibrio vulgaris)).